Reading from the N-terminus, the 101-residue chain is Small ribosomal subunit protein uS14 (101 aa).

Belongs to the universal ribosomal protein uS14 family. Part of the 30S ribosomal subunit. Contacts proteins S3 and S10.

Binds 16S rRNA, required for the assembly of 30S particles and may also be responsible for determining the conformation of the 16S rRNA at the A site. In Caulobacter vibrioides (strain ATCC 19089 / CIP 103742 / CB 15) (Caulobacter crescentus), this protein is Small ribosomal subunit protein uS14.